We begin with the raw amino-acid sequence, 204 residues long: Thioredoxin-like 4, chloroplastic (204 aa).

The transit peptide at 1–27 (MSSLLNISHCSYHGYSGLTSRGGINTV) directs the protein to the chloroplast. Positions 63–201 (AKSLSQENLV…IDAAILKYTS (139 aa)) constitute a Thioredoxin domain. Catalysis depends on nucleophile residues cysteine 119 and cysteine 122. A disulfide bridge links cysteine 119 with cysteine 122.

Belongs to the thioredoxin family.

It localises to the plastid. The protein localises to the chloroplast. Functionally, probable thiol-disulfide oxidoreductase that may participate in various redox reactions. This is Thioredoxin-like 4, chloroplastic from Arabidopsis thaliana (Mouse-ear cress).